A 131-amino-acid chain; its full sequence is Ribonuclease VapC13 (131 aa).

The PINc domain maps to 2–128 (ILVDSNIPMY…RGFDSYPGIK (127 aa)). Mg(2+)-binding residues include Asp5 and Asp99.

Belongs to the PINc/VapC protein family. The cofactor is Mg(2+).

Its subcellular location is the secreted. In terms of biological role, toxic component of a type II toxin-antitoxin (TA) system. An RNase. The cognate antitoxin is VapB13. This chain is Ribonuclease VapC13, found in Mycobacterium tuberculosis (strain ATCC 25618 / H37Rv).